The chain runs to 199 residues: Type-4 uracil-DNA glycosylase (199 aa).

Positions 14 and 17 each coordinate [4Fe-4S] cluster. Uracil-binding positions include 41 to 43 (GEA), Phe55, and Asn81. Residues 77–114 (VYITNVLKCRPPNNRDPTPEEVEKCGDYLVRQLEAIRP) are pseudo-FCL. Residues Cys85 and Cys101 each contribute to the [4Fe-4S] cluster site. His163 is a uracil binding site.

Belongs to the uracil-DNA glycosylase (UDG) superfamily. Type 4 (UDGa) family.

It catalyses the reaction Hydrolyzes single-stranded DNA or mismatched double-stranded DNA and polynucleotides, releasing free uracil.. With respect to regulation, product-inhibited by both uracil and apurinic/apyrimidinic sites. In terms of biological role, removes uracil bases that are present in DNA as a result of either deamination of cytosine or misincorporation of dUMP instead of dTMP. Can remove uracil from double-stranded DNA containing either a U/G or U/A base pair as well as from single-stranded DNA. The polypeptide is Type-4 uracil-DNA glycosylase (Archaeoglobus fulgidus (strain ATCC 49558 / DSM 4304 / JCM 9628 / NBRC 100126 / VC-16)).